The chain runs to 309 residues: Putative ankyrin repeat protein R603 (309 aa).

ANK repeat units follow at residues 53–82 (QVNG…MNPE), 83–112 (NKSQ…DVSL), 114–144 (DHFA…DVTS), 145–176 (NNNL…DIHA), 177–206 (DEYF…DVNM), 214–243 (NVLS…DISF), and 245–274 (DDND…DISF).

The protein is Putative ankyrin repeat protein R603 of Acanthamoeba polyphaga (Amoeba).